Here is a 455-residue protein sequence, read N- to C-terminus: ATP-dependent protease ATPase subunit HslU (455 aa).

ATP contacts are provided by residues Ile19 and 61–66 (GVGKTE). Residues 144–163 (ESKVGFANEPAEDAASKKEK) are disordered. ATP contacts are provided by Asp268, Glu333, and Arg405.

This sequence belongs to the ClpX chaperone family. HslU subfamily. In terms of assembly, a double ring-shaped homohexamer of HslV is capped on each side by a ring-shaped HslU homohexamer. The assembly of the HslU/HslV complex is dependent on binding of ATP.

It is found in the cytoplasm. Its function is as follows. ATPase subunit of a proteasome-like degradation complex; this subunit has chaperone activity. The binding of ATP and its subsequent hydrolysis by HslU are essential for unfolding of protein substrates subsequently hydrolyzed by HslV. HslU recognizes the N-terminal part of its protein substrates and unfolds these before they are guided to HslV for hydrolysis. The sequence is that of ATP-dependent protease ATPase subunit HslU from Francisella tularensis subsp. novicida (strain U112).